Reading from the N-terminus, the 153-residue chain is 6,7-dimethyl-8-ribityllumazine synthase (153 aa).

5-amino-6-(D-ribitylamino)uracil-binding positions include Phe-21, 55 to 57 (AFE), and 79 to 81 (TVI). 84-85 (AT) is a binding site for (2S)-2-hydroxy-3-oxobutyl phosphate. His-87 functions as the Proton donor in the catalytic mechanism. A 5-amino-6-(D-ribitylamino)uracil-binding site is contributed by Phe-112. Arg-126 provides a ligand contact to (2S)-2-hydroxy-3-oxobutyl phosphate.

Belongs to the DMRL synthase family. Forms an icosahedral capsid composed of 60 subunits, arranged as a dodecamer of pentamers.

It carries out the reaction (2S)-2-hydroxy-3-oxobutyl phosphate + 5-amino-6-(D-ribitylamino)uracil = 6,7-dimethyl-8-(1-D-ribityl)lumazine + phosphate + 2 H2O + H(+). The protein operates within cofactor biosynthesis; riboflavin biosynthesis; riboflavin from 2-hydroxy-3-oxobutyl phosphate and 5-amino-6-(D-ribitylamino)uracil: step 1/2. Functionally, catalyzes the formation of 6,7-dimethyl-8-ribityllumazine by condensation of 5-amino-6-(D-ribitylamino)uracil with 3,4-dihydroxy-2-butanone 4-phosphate. This is the penultimate step in the biosynthesis of riboflavin. In Bacillus anthracis (strain A0248), this protein is 6,7-dimethyl-8-ribityllumazine synthase.